Consider the following 463-residue polypeptide: Elongation factor 1-alpha (463 aa).

A tr-type G domain is found at K5–T242. The tract at residues G14–S21 is G1. Residue G14–S21 participates in GTP binding. Positions G70–D74 are G2. The interval D91–G94 is G3. GTP contacts are provided by residues D91–H95 and N153–D156. The G4 stretch occupies residues N153–D156. The G5 stretch occupies residues S194 to W196. A 5-glutamyl glycerylphosphorylethanolamine mark is found at E301 and E374.

The protein belongs to the TRAFAC class translation factor GTPase superfamily. Classic translation factor GTPase family. EF-Tu/EF-1A subfamily.

Its subcellular location is the cytoplasm. Functionally, this protein promotes the GTP-dependent binding of aminoacyl-tRNA to the A-site of ribosomes during protein biosynthesis. The polypeptide is Elongation factor 1-alpha (Bombyx mori (Silk moth)).